Reading from the N-terminus, the 527-residue chain is Peptide chain release factor 3 (527 aa).

Positions 9–278 (NKRRTFAIIS…GLTQWAPKPQ (270 aa)) constitute a tr-type G domain. GTP-binding positions include 18 to 25 (SHPDAGKT), 86 to 90 (DTPGH), and 140 to 143 (NKLD).

The protein belongs to the TRAFAC class translation factor GTPase superfamily. Classic translation factor GTPase family. PrfC subfamily.

The protein resides in the cytoplasm. Functionally, increases the formation of ribosomal termination complexes and stimulates activities of RF-1 and RF-2. It binds guanine nucleotides and has strong preference for UGA stop codons. It may interact directly with the ribosome. The stimulation of RF-1 and RF-2 is significantly reduced by GTP and GDP, but not by GMP. This chain is Peptide chain release factor 3, found in Haemophilus influenzae (strain 86-028NP).